The primary structure comprises 253 residues: Phosphoadenosine 5'-phosphosulfate reductase (253 aa).

The active-site Nucleophile; cysteine thiosulfonate intermediate is Cys239.

It belongs to the PAPS reductase family. CysH subfamily.

Its subcellular location is the cytoplasm. The enzyme catalyses [thioredoxin]-disulfide + sulfite + adenosine 3',5'-bisphosphate + 2 H(+) = [thioredoxin]-dithiol + 3'-phosphoadenylyl sulfate. Its pathway is sulfur metabolism; hydrogen sulfide biosynthesis; sulfite from sulfate: step 3/3. In terms of biological role, catalyzes the formation of sulfite from phosphoadenosine 5'-phosphosulfate (PAPS) using thioredoxin as an electron donor. In Aliivibrio salmonicida (strain LFI1238) (Vibrio salmonicida (strain LFI1238)), this protein is Phosphoadenosine 5'-phosphosulfate reductase.